Here is a 283-residue protein sequence, read N- to C-terminus: MRIDVVTIFPDYLRPLELALVGRAASRDLVDIQTHDLRAWTHDVHRTVDDSPYGGGPGMVMRPEPWDAALRDIVARDPSRRPRVVVPTPAGVPFTQSYAAELAEQDWLIFCCGRYEGIDGRVVDAWADDEISIGDYVLAGGEVATLVMVEAVTRLLPGVVGNAESIIDDSFAHGLLEGPVYTRPPVWEGRAVPEILRSGDHAAIARWRREEALRRTCRRRPELLDRIELSDADRAVVASTIVAAHGGGDDPPVTGVEDAVTIAERGTIGDGPAPSGCASSHCS.

S-adenosyl-L-methionine contacts are provided by residues Gly-113 and 133 to 138 (IGDYVL).

It belongs to the RNA methyltransferase TrmD family. In terms of assembly, homodimer.

Its subcellular location is the cytoplasm. It carries out the reaction guanosine(37) in tRNA + S-adenosyl-L-methionine = N(1)-methylguanosine(37) in tRNA + S-adenosyl-L-homocysteine + H(+). Functionally, specifically methylates guanosine-37 in various tRNAs. The polypeptide is tRNA (guanine-N(1)-)-methyltransferase (Parafrankia sp. (strain EAN1pec)).